The chain runs to 210 residues: Glutathione S-transferase P (210 aa).

The 80-residue stretch at 2 to 81 (PPYTIVYFPV…HLGRSLGLYG (80 aa)) folds into the GST N-terminal domain. Y4 carries the post-translational modification Phosphotyrosine; by EGFR. Glutathione contacts are provided by residues Y8, R14, W39, K45, and 52–53 (QL). T62 carries the post-translational modification Phosphothreonine. 65–66 (QS) contributes to the glutathione binding site. The GST C-terminal domain maps to 83–204 (DQREAALVDM…SSPDHVNRPI (122 aa)). Residues K103 and K116 each carry the N6-succinyllysine modification. K128 carries the post-translational modification N6-acetyllysine.

The protein belongs to the GST superfamily. Pi family. In terms of assembly, homodimer. Interacts with CDK5.

The protein localises to the cytoplasm. It is found in the mitochondrion. Its subcellular location is the nucleus. The enzyme catalyses RX + glutathione = an S-substituted glutathione + a halide anion + H(+). The catalysed reaction is prostaglandin J2 + glutathione = prostaglandin J2-S-(R)-glutathione. It carries out the reaction prostaglandin J2 + glutathione = prostaglandin J2-S-(S)-glutathione. It catalyses the reaction prostaglandin A2 + glutathione = prostaglandin A2-S-(S)-glutathione. The enzyme catalyses 11(S)-hydroxy-14(S),15(S)-epoxy-(5Z,8Z,12E)-eicosatrienoate + glutathione = (11S,15S)-dihydroxy-14(R)-S-glutathionyl-(5Z,8Z,12E)-eicosatrienoate. In terms of biological role, conjugation of reduced glutathione to a wide number of exogenous and endogenous hydrophobic electrophiles. Involved in the formation of glutathione conjugates of both prostaglandin A2 (PGA2) and prostaglandin J2 (PGJ2). Participates in the formation of novel hepoxilin regioisomers. Negatively regulates CDK5 activity via p25/p35 translocation to prevent neurodegeneration. The sequence is that of Glutathione S-transferase P (GSTP1) from Cricetulus longicaudatus (Long-tailed dwarf hamster).